Consider the following 131-residue polypeptide: Period circadian protein (131 aa).

Residues 29–109 (VTAPVELDPP…NSAGGASGGV (81 aa)) form a disordered region. Residues 71–93 (SGNFTTGSNVRMSSVTNTSNAGT) show a composition bias toward low complexity. Residues 94-109 (GTSGGGNSAGGASGGV) are compositionally biased toward gly residues.

As to quaternary structure, forms a heterodimer with timeless (TIM); the complex then translocates into the nucleus. Post-translationally, phosphorylated with a circadian rhythmicity, probably by the double-time protein (dbt). Phosphorylation could be implicated in the stability of per monomer and in the formation of heterodimer per-tim.

Its subcellular location is the nucleus. It localises to the cytoplasm. It is found in the perinuclear region. Functionally, essential for biological clock functions. Determines the period length of circadian and ultradian rhythms; an increase in PER dosage leads to shortened circadian rhythms and a decrease leads to lengthened circadian rhythms. Essential for the circadian rhythmicity of locomotor activity, eclosion behavior, and for the rhythmic component of the male courtship song that originates in the thoracic nervous system. The biological cycle depends on the rhythmic formation and nuclear localization of the TIM-PER complex. Light induces the degradation of TIM, which promotes elimination of PER. Nuclear activity of the heterodimer coordinatively regulates PER and TIM transcription through a negative feedback loop. Behaves as a negative element in circadian transcriptional loop. Does not appear to bind DNA, suggesting indirect transcriptional inhibition. This Zaprionus tuberculatus (Vinegar fly) protein is Period circadian protein (per).